The sequence spans 240 residues: Probable transcriptional regulator ycf27 (240 aa).

The Response regulatory domain occupies 5 to 118 (KILVIDDEAS…ELEARIRSVL (114 aa)). A 4-aspartylphosphate modification is found at Asp54. The H-T-H motif DNA-binding region spans 74-92 (DVPIIMLTALSDVSDRITG). The ompR/PhoB-type DNA-binding region spans 133–234 (SGIINIGFLK…ARGTGYLFQR (102 aa)).

It localises to the plastid. The protein localises to the chloroplast. Functionally, probable promoter-specific protein mediating the interaction between DNA and RNA polymerase. This chain is Probable transcriptional regulator ycf27 (ycf27), found in Porphyridium aerugineum (Red microalga).